Reading from the N-terminus, the 201-residue chain is CASP-like protein 2D1 (201 aa).

Residues 1 to 26 (MRSGEGSTAAAAAAEEEKVKVAAPFR) are Cytoplasmic-facing. The helical transmembrane segment at 27 to 47 (LAELGLRVCAVPLAVASVWEM) threads the bilayer. Residues 48–70 (ATNKQVDETYGEVRFSDLSGFRY) lie on the Extracellular side of the membrane. Residues 71 to 91 (LVWINAITAAYSVASILLSSC) form a helical membrane-spanning segment. The Cytoplasmic segment spans residues 92–98 (RFITRFD). A helical membrane pass occupies residues 99-119 (WLIFILDQASAYLLLTSASAA). Over 120 to 148 (AEVVYLAREGDREVSWGEVCSYFGRFCGA) the chain is Extracellular. The chain crosses the membrane as a helical span at residues 149 to 169 (ATVSVALNAAALLCFMALSLI). At 170–201 (SAFRVFTKFNPPSQSNSKQQLSQEQGKPVVSG) the chain is on the cytoplasmic side. A compositionally biased stretch (polar residues) spans 180–194 (PPSQSNSKQQLSQEQ). The segment at 180–201 (PPSQSNSKQQLSQEQGKPVVSG) is disordered.

This sequence belongs to the Casparian strip membrane proteins (CASP) family. Homodimer and heterodimers.

Its subcellular location is the cell membrane. The chain is CASP-like protein 2D1 from Oryza sativa subsp. indica (Rice).